Consider the following 169-residue polypeptide: MICOS complex subunit MIC19 (169 aa).

The N-myristoyl glycine moiety is linked to residue Gly-2. The region spanning 123–165 is the CHCH domain; that stretch reads ENVCQDNENEIVRCLQENPGRVLKCAPLTEAFEKCVGEFRQQV. 2 short sequence motifs (cx9C motif) span residues 126–136 and 147–157; these read CQDNENEIVRC and CAPLTEAFEKC. 2 cysteine pairs are disulfide-bonded: Cys-126–Cys-157 and Cys-136–Cys-147.

The protein belongs to the MICOS complex subunit Mic19 family. Metazoan Mic19 subfamily. As to quaternary structure, component of the mitochondrial contact site and cristae organizing system (MICOS) complex.

It localises to the mitochondrion inner membrane. In terms of biological role, plays a role in maintaining mitochondrial morphology. May act as a component of the MICOS complex, a large protein complex of the mitochondria. This chain is MICOS complex subunit MIC19, found in Caenorhabditis elegans.